The primary structure comprises 43 residues: Methionine aminopeptidase (43 aa).

This sequence belongs to the peptidase M24A family. Methionine aminopeptidase type 1 subfamily. As to quaternary structure, monomer. It depends on Co(2+) as a cofactor. The cofactor is Zn(2+). Mn(2+) is required as a cofactor. Fe(2+) serves as cofactor.

The catalysed reaction is Release of N-terminal amino acids, preferentially methionine, from peptides and arylamides.. Removes the N-terminal methionine from nascent proteins. The N-terminal methionine is often cleaved when the second residue in the primary sequence is small and uncharged (Met-Ala-, Cys, Gly, Pro, Ser, Thr, or Val). Requires deformylation of the N(alpha)-formylated initiator methionine before it can be hydrolyzed. In Klebsiella oxytoca, this protein is Methionine aminopeptidase (map).